The primary structure comprises 376 residues: Queuine tRNA-ribosyltransferase (376 aa).

The active-site Proton acceptor is D93. Substrate is bound by residues 93–97, D147, Q190, and G217; that span reads DSGGF. Residues 248–254 are RNA binding; sequence GVGKPDD. Residue D267 is the Nucleophile of the active site. Zn(2+) contacts are provided by C305, C307, C310, and H336.

This sequence belongs to the queuine tRNA-ribosyltransferase family. Homodimer. Within each dimer, one monomer is responsible for RNA recognition and catalysis, while the other monomer binds to the replacement base PreQ1. Zn(2+) serves as cofactor.

It carries out the reaction 7-aminomethyl-7-carbaguanine + guanosine(34) in tRNA = 7-aminomethyl-7-carbaguanosine(34) in tRNA + guanine. The protein operates within tRNA modification; tRNA-queuosine biosynthesis. In terms of biological role, catalyzes the base-exchange of a guanine (G) residue with the queuine precursor 7-aminomethyl-7-deazaguanine (PreQ1) at position 34 (anticodon wobble position) in tRNAs with GU(N) anticodons (tRNA-Asp, -Asn, -His and -Tyr). Catalysis occurs through a double-displacement mechanism. The nucleophile active site attacks the C1' of nucleotide 34 to detach the guanine base from the RNA, forming a covalent enzyme-RNA intermediate. The proton acceptor active site deprotonates the incoming PreQ1, allowing a nucleophilic attack on the C1' of the ribose to form the product. After dissociation, two additional enzymatic reactions on the tRNA convert PreQ1 to queuine (Q), resulting in the hypermodified nucleoside queuosine (7-(((4,5-cis-dihydroxy-2-cyclopenten-1-yl)amino)methyl)-7-deazaguanosine). The sequence is that of Queuine tRNA-ribosyltransferase from Jannaschia sp. (strain CCS1).